Here is a 95-residue protein sequence, read N- to C-terminus: Small ribosomal subunit protein bS6 (95 aa).

The protein belongs to the bacterial ribosomal protein bS6 family.

Binds together with bS18 to 16S ribosomal RNA. This chain is Small ribosomal subunit protein bS6, found in Clostridium novyi (strain NT).